Here is a 100-residue protein sequence, read N- to C-terminus: Small ribosomal subunit protein uS14c (100 aa).

The interval 1–54 (MARKSLIQRERKRQKLEQKFHSIRRSSKKEISKVSSLSGKWEIHGKLQSPPRNS) is disordered.

It belongs to the universal ribosomal protein uS14 family. Part of the 30S ribosomal subunit.

The protein localises to the plastid. It is found in the chloroplast. Its function is as follows. Binds 16S rRNA, required for the assembly of 30S particles. The polypeptide is Small ribosomal subunit protein uS14c (Piper cenocladum (Ant piper)).